Consider the following 405-residue polypeptide: Subtilisin-like protease 6 (405 aa).

An N-terminal signal peptide occupies residues 1 to 18; sequence FITKAIPIVLAALSAVNG. The propeptide occupies 19–125; sequence AKILEAGPHA…VRTSTNGTNL (107 aa). The region spanning 34-118 is the Inhibitor I9 domain; it reads KYIVVMKKDV…YIEPDFVVRT (85 aa). Residues N121 and N124 are each glycosylated (N-linked (GlcNAc...) asparagine). Residues 133-405 enclose the Peptidase S8 domain; that stretch reads SWGLARVGSK…GEGTTGKLIY (273 aa). Active-site charge relay system residues include D165 and H196. 2 N-linked (GlcNAc...) asparagine glycosylation sites follow: N250 and N262. S356 acts as the Charge relay system in catalysis.

The protein belongs to the peptidase S8 family.

It is found in the secreted. Its function is as follows. Secreted subtilisin-like serine protease with keratinolytic activity that contributes to pathogenicity. This Trichophyton schoenleinii protein is Subtilisin-like protease 6 (SUB6).